The sequence spans 363 residues: DNA replication and repair protein RecF (363 aa).

30–37 (GSNGSGKT) contributes to the ATP binding site.

Belongs to the RecF family.

The protein localises to the cytoplasm. In terms of biological role, the RecF protein is involved in DNA metabolism; it is required for DNA replication and normal SOS inducibility. RecF binds preferentially to single-stranded, linear DNA. It also seems to bind ATP. This Photorhabdus laumondii subsp. laumondii (strain DSM 15139 / CIP 105565 / TT01) (Photorhabdus luminescens subsp. laumondii) protein is DNA replication and repair protein RecF.